Here is a 322-residue protein sequence, read N- to C-terminus: MPVHSREKKESNHNDMEVDYPENEGTSSEEDDSDSSSGSEEGDSSEMDDEDCERRRMECLDEMSNLEKQFTDLKDQLYKERLSQVDAKLQEVIAGKAPEYLEPLANLQENMQIRTKVAGIYRELCLESVKNKHDCEIQAARQHCESEKLLLYDTVQSELEEKIRRLEEDRHSIDITSELWNDELQSRRKRKDPFSPDKKKKPVVVSGPYIVYMLQDLDILEDWTTIRKAMASFGPHRVKPEVTVKMEKHQHSARSEEGRLHYDGEWYGRGQTICIDKKDEFPTSAVITTINSDEVWFKRQDGSKSKLYISQLQKGKYSIKHI.

The span at 1-16 shows a compositional bias: basic and acidic residues; it reads MPVHSREKKESNHNDM. Residues 1–56 are disordered; sequence MPVHSREKKESNHNDMEVDYPENEGTSSEEDDSDSSSGSEEGDSSEMDDEDCERRR. The segment covering 17 to 51 has biased composition (acidic residues); sequence EVDYPENEGTSSEEDDSDSSSGSEEGDSSEMDDED. Coiled-coil stretches lie at residues 50-82 and 147-178; these read EDCE…KERL and EKLL…ITSE.

Belongs to the BRMS1 family.

Its subcellular location is the nucleus. Involved in the histone deacetylase (HDAC1)-dependent transcriptional repression activity. This is Breast cancer metastasis-suppressor 1-like protein (brms1l) from Xenopus tropicalis (Western clawed frog).